A 253-amino-acid chain; its full sequence is Triosephosphate isomerase (253 aa).

13-15 (NWK) serves as a coordination point for substrate. Histidine 100 functions as the Electrophile in the catalytic mechanism. Glutamate 169 functions as the Proton acceptor in the catalytic mechanism. Substrate is bound by residues glycine 175, serine 208, and 229–230 (GG).

This sequence belongs to the triosephosphate isomerase family. In terms of assembly, homodimer.

It localises to the cytoplasm. It catalyses the reaction D-glyceraldehyde 3-phosphate = dihydroxyacetone phosphate. It functions in the pathway carbohydrate biosynthesis; gluconeogenesis. Its pathway is carbohydrate degradation; glycolysis; D-glyceraldehyde 3-phosphate from glycerone phosphate: step 1/1. In terms of biological role, involved in the gluconeogenesis. Catalyzes stereospecifically the conversion of dihydroxyacetone phosphate (DHAP) to D-glyceraldehyde-3-phosphate (G3P). This is Triosephosphate isomerase from Synechococcus sp. (strain RCC307).